An 876-amino-acid chain; its full sequence is Alanine--tRNA ligase (876 aa).

Residues histidine 565, histidine 569, cysteine 667, and histidine 671 each coordinate Zn(2+).

It belongs to the class-II aminoacyl-tRNA synthetase family. It depends on Zn(2+) as a cofactor.

It localises to the cytoplasm. It catalyses the reaction tRNA(Ala) + L-alanine + ATP = L-alanyl-tRNA(Ala) + AMP + diphosphate. Catalyzes the attachment of alanine to tRNA(Ala) in a two-step reaction: alanine is first activated by ATP to form Ala-AMP and then transferred to the acceptor end of tRNA(Ala). Also edits incorrectly charged Ser-tRNA(Ala) and Gly-tRNA(Ala) via its editing domain. This chain is Alanine--tRNA ligase, found in Staphylococcus aureus (strain Mu3 / ATCC 700698).